Reading from the N-terminus, the 1146-residue chain is Cell division cycle and apoptosis regulator protein 1 (1146 aa).

An interaction with AR region spans residues 1–246 (MAQFGGQKNP…AQPQPQSLLQ (246 aa)). An interaction with GATA2 region spans residues 200 to 657 (QRIQTLPNQN…RALSSKGLKS (458 aa)). The interval 282–351 (IVSQPQPARR…RRERERSPRR (70 aa)) is disordered. Basic and acidic residues-rich tracts occupy residues 290–331 (RRLD…ERSP) and 338–349 (ERSPRRERERSP). The residue at position 453 (serine 453) is a Phosphoserine. A coiled-coil region spans residues 591–615 (KQQLVEKLQGERKKADGEQDEEEKD). Residues 599–635 (QGERKKADGEQDEEEKDDGEVKEIATPTHWSKLDPKA) form a disordered region. Residues 608-618 (EQDEEEKDDGE) are compositionally biased toward acidic residues. Phosphothreonine is present on threonine 624. An SAP domain is found at 633–667 (PKAMKVNDLRKELESRALSSKGLKSQLIARLTKQL). A Glycyl lysine isopeptide (Lys-Gly) (interchain with G-Cter in ubiquitin) cross-link involves residue lysine 634. Positions 640-1146 (DLRKELESRA…EKSKENGSGV (507 aa)) are interaction with GATA1. Phosphothreonine is present on threonine 664. Composition is skewed to basic and acidic residues over residues 671-684 (EQKE…KSEK), 691-716 (DKKS…RQER), 793-814 (KEDK…KKEE), and 829-852 (SGDD…KDDS). 2 disordered regions span residues 671 to 716 (EQKE…RQER) and 793 to 912 (KEDK…KEKP). A phosphoserine mark is found at serine 682 and serine 694. Acidic residues predominate over residues 853–884 (KDDDETEEDNNQDEYDPMEAEEAEDEDDDREE). The residue at position 858 (threonine 858) is a Phosphothreonine. Positions 885-912 (EEVKRDDKRDVSRYCKDRPAKDKEKEKP) are enriched in basic and acidic residues. Lysine 1008 participates in a covalent cross-link: Glycyl lysine isopeptide (Lys-Gly) (interchain with G-Cter in SUMO1); alternate. A Glycyl lysine isopeptide (Lys-Gly) (interchain with G-Cter in SUMO2); alternate cross-link involves residue lysine 1008. A coiled-coil region spans residues 1029–1110 (DVGSLLQKLE…LQFENQLNKT (82 aa)). Residues lysine 1063 and lysine 1131 each participate in a glycyl lysine isopeptide (Lys-Gly) (interchain with G-Cter in SUMO2) cross-link.

As to quaternary structure, directly interacts with ESR1, NR3C1 and p53/TP53. Interacts (via N-terminus) with CALCOCO1. Interacts with MED1 and GATA1. Interacts with AR and GATA2.

Its subcellular location is the cytoplasm. It localises to the perinuclear region. Its function is as follows. Associates with components of the Mediator and p160 coactivator complexes that play a role as intermediaries transducing regulatory signals from upstream transcriptional activator proteins to basal transcription machinery at the core promoter. Recruited to endogenous nuclear receptor target genes in response to the appropriate hormone. Also functions as a p53 coactivator. May thus play an important role in transcriptional regulation. May be involved in apoptosis signaling in the presence of the retinoid CD437. Apoptosis induction involves sequestration of 14-3-3 protein(s) and mediated altered expression of multiple cell cycle regulatory genes including MYC, CCNB1 and CDKN1A. Plays a role in cell cycle progression and/or cell proliferation. In association with CALCOCO1 enhances GATA1- and MED1-mediated transcriptional activation from the gamma-globin promoter during erythroid differentiation of K562 erythroleukemia cells. Can act as a both a coactivator and corepressor of AR-mediated transcription. Contributes to chromatin looping and AR transcription complex assembly by stabilizing AR-GATA2 association on chromatin and facilitating MED1 and RNA polymerase II recruitment to AR-binding sites. May play an important role in the growth and tumorigenesis of prostate cancer cells. In Mus musculus (Mouse), this protein is Cell division cycle and apoptosis regulator protein 1 (Ccar1).